A 422-amino-acid polypeptide reads, in one-letter code: Vitamin D3 receptor (422 aa).

A DNA-binding region (nuclear receptor) is located at residues 22–90 (PRICGVCGDK…RLKRCVDIGM (69 aa)). Residues cysteine 25, cysteine 28, cysteine 42, cysteine 45, cysteine 61, cysteine 67, cysteine 77, and cysteine 80 each coordinate Zn(2+). 2 NR C4-type zinc fingers span residues 25 to 45 (CGVCGDKATGFHFNAMTCEGC) and 61 to 85 (CPFNGDCRITKDNRRHCQSCRLKRC). The hinge stretch occupies residues 98 to 127 (DEEVQRKRQMINKRKSEEALKESMRPKISD). Residues 128 to 418 (EQQKMIDILL…LTPLMLEVFS (291 aa)) enclose the NR LBD domain. The disordered stretch occupies residues 170–191 (RSSSVHTQGSPSEDSDVFTSSP). Residue serine 232 coordinates calcitriol. The segment at 241–259 (KMIPGFRDLIAEDQIALLK) is interaction with coactivator LXXLL motif. Arginine 269, serine 273, histidine 300, and histidine 392 together coordinate calcitriol. Residues 411 to 419 (PLMLEVFSD) carry the 9aaTAD motif.

This sequence belongs to the nuclear hormone receptor family. NR1 subfamily. As to quaternary structure, homodimer in the absence of bound vitamin D3. Heterodimer with RXRA after vitamin D3 binding. As to expression, detected in all tissues examined. Highest level in small intestine and skin.

The protein resides in the nucleus. Its subcellular location is the cytoplasm. Its function is as follows. Nuclear receptor for calcitriol, the active form of vitamin D3 which mediates the action of this vitamin on cells. Enters the nucleus upon vitamin D3 binding where it forms heterodimers with the retinoid X receptor/RXR. The VDR-RXR heterodimers bind to specific response elements on DNA and activate the transcription of vitamin D3-responsive target genes. Plays a central role in calcium homeostasis. Also functions as a receptor for the secondary bile acid lithocholic acid (LCA) and its metabolites. This chain is Vitamin D3 receptor (vdr), found in Xenopus laevis (African clawed frog).